The chain runs to 814 residues: Tax1-binding protein 1 homolog (814 aa).

Residues serine 124, serine 138, and serine 225 each carry the phosphoserine modification. Positions 144 to 623 form a coiled coil; sequence TTKAGLLELK…KELTKSLEDQ (480 aa). The interval 320–420 is oligomerization; sequence EEISKLQSCL…ELQLHAVKKD (101 aa). A Phosphoserine; by IKKA modification is found at serine 619. Phosphoserine is present on serine 632. Serine 693 carries the post-translational modification Phosphoserine; by IKKA. Residues 701 to 733 are disordered; it reads SQPARNLSRPDGLEDPEDSREDENVPIPPDPAN. UBZ1-type zinc fingers lie at residues 752-778 and 779-805; these read HKKC…VESH and WKVC…VQTH. 8 residues coordinate Zn(2+): cysteine 755, cysteine 758, histidine 774, histidine 778, cysteine 782, cysteine 785, histidine 801, and histidine 805.

In terms of assembly, homooligomer. Interacts with TNFAIP3. Interacts with STARD13. Interacts with MYO6. Interacts with TOM1; the interaction is indirect and is mediated by MYO6, which acts as a bridge between TOM1 and TAX1BP1. Interacts with MAVS; this interaction induces MAVS polyubiquitination. Interacts with TNIP1. Interacts with TRAF6; this interaction mediates deubiquitination of TRAF6 and inhibition of NF-kappa-B activation. Interacts with RIPK1; this interaction negatively regulates RIPK1 ubiquitination. Interacts with NBR1. Interacts with TBK1. Interacts with RB1CC1. Interacts with SQSTM1. Interacts with AZI2. Interacts with TICAM1 and TRIM32; these interactions target TICAM1 to TAX1BP1-mediated selective autophagic degradation. Phosphorylated in the C-terminal region by CHUK/IKKA leading to NF-kappa-B signaling down-regulation.

The protein resides in the cytoplasm. Its subcellular location is the mitochondrion. It is found in the preautophagosomal structure. The protein localises to the cytoplasmic vesicle. It localises to the autophagosome. Ubiquitin-binding adapter that participates in inflammatory, antiviral and innate immune processes as well as selective autophagy regulation. Plays a key role in the negative regulation of NF-kappa-B and IRF3 signalings by acting as an adapter for the ubiquitin-editing enzyme A20/TNFAIP3 to bind and inactivate its substrates. Disrupts the interactions between the E3 ubiquitin ligase TRAF3 and TBK1/IKBKE to attenuate 'Lys63'-linked polyubiquitination of TBK1 and thereby IFN-beta production. Also recruits A20/TNFAIP3 to ubiquitinated signaling proteins TRAF6 and RIPK1, leading to their deubiquitination and disruption of IL-1 and TNF-induced NF-kappa-B signaling pathways. Inhibits virus-induced apoptosis by inducing the 'Lys-48'-linked polyubiquitination and degradation of MAVS via recruitment of the E3 ligase ITCH, thereby attenuating MAVS-mediated apoptosis signaling. As a macroautophagy/autophagy receptor, facilitates the xenophagic clearance of pathogenic bacteria such as Salmonella typhimurium and Mycobacterium tuberculosis. Upon NBR1 recruitment to the SQSTM1-ubiquitin condensates, acts as the major recruiter of RB1CC1 to these ubiquitin condensates to promote their autophagic degradation. Mediates the autophagic degradation of other substrates including TICAM1. This is Tax1-binding protein 1 homolog (Tax1bp1) from Mus musculus (Mouse).